Consider the following 394-residue polypeptide: Phosphoglycerate kinase (394 aa).

Substrate-binding positions include 21–23 (DLN), R37, 60–63 (HLGR), R115, and R148. Residues K199, E321, and 347-350 (GGDT) contribute to the ATP site.

This sequence belongs to the phosphoglycerate kinase family. Monomer.

The protein resides in the cytoplasm. It carries out the reaction (2R)-3-phosphoglycerate + ATP = (2R)-3-phospho-glyceroyl phosphate + ADP. The protein operates within carbohydrate degradation; glycolysis; pyruvate from D-glyceraldehyde 3-phosphate: step 2/5. The sequence is that of Phosphoglycerate kinase from Azoarcus sp. (strain BH72).